A 117-amino-acid chain; its full sequence is Immunoglobulin kappa variable 1-27 (117 aa).

Positions 1-22 (MDMRVPAQLLGLLLLWLPDTRC) are cleaved as a signal peptide. The segment at 23–45 (DIQMTQSPSSLSASVGDRVTITC) is framework-1. The 95-residue stretch at 23-117 (DIQMTQSPSS…YYCQKYNSAP (95 aa)) folds into the Ig-like domain. Cysteines 45 and 110 form a disulfide. The tract at residues 46–56 (RASQGISNYLA) is complementarity-determining-1. Residues 57–71 (WYQQKPGKVPKLLIY) are framework-2. Residues 72 to 78 (AASTLQS) are complementarity-determining-2. Residues 79 to 110 (GVPSRFSGSGSGTDFTLTISSLQPEDVATYYC) are framework-3. The segment at 111–117 (QKYNSAP) is complementarity-determining-3.

As to quaternary structure, immunoglobulins are composed of two identical heavy chains and two identical light chains; disulfide-linked.

Its subcellular location is the secreted. It localises to the cell membrane. Its function is as follows. V region of the variable domain of immunoglobulin light chains that participates in the antigen recognition. Immunoglobulins, also known as antibodies, are membrane-bound or secreted glycoproteins produced by B lymphocytes. In the recognition phase of humoral immunity, the membrane-bound immunoglobulins serve as receptors which, upon binding of a specific antigen, trigger the clonal expansion and differentiation of B lymphocytes into immunoglobulins-secreting plasma cells. Secreted immunoglobulins mediate the effector phase of humoral immunity, which results in the elimination of bound antigens. The antigen binding site is formed by the variable domain of one heavy chain, together with that of its associated light chain. Thus, each immunoglobulin has two antigen binding sites with remarkable affinity for a particular antigen. The variable domains are assembled by a process called V-(D)-J rearrangement and can then be subjected to somatic hypermutations which, after exposure to antigen and selection, allow affinity maturation for a particular antigen. This chain is Immunoglobulin kappa variable 1-27, found in Homo sapiens (Human).